The primary structure comprises 371 residues: uncharacterized protein (371 aa).

The helical transmembrane segment at 17 to 33 (FLLFSVVLIIVMTTLVF) threads the bilayer.

The protein to S.pombe SpBC4C3.08 and SpBC4C3.09.

Its subcellular location is the membrane. This is an uncharacterized protein from Schizosaccharomyces pombe (strain 972 / ATCC 24843) (Fission yeast).